A 146-amino-acid polypeptide reads, in one-letter code: Large ribosomal subunit protein uL15 (146 aa).

Positions 1-13 (MKLHELKPSEGSR) are enriched in basic and acidic residues. The tract at residues 1 to 57 (MKLHELKPSEGSRKTRNRVGRGIGSGNGKTAGKGHKGQNARSGGGVRPGFEGGQMPL) is disordered. Gly residues-rich tracts occupy residues 21–31 (RGIGSGNGKTA) and 42–52 (SGGGVRPGFEG).

The protein belongs to the universal ribosomal protein uL15 family. As to quaternary structure, part of the 50S ribosomal subunit.

Its function is as follows. Binds to the 23S rRNA. The chain is Large ribosomal subunit protein uL15 from Bacillus subtilis (strain 168).